An 89-amino-acid polypeptide reads, in one-letter code: Small ribosomal subunit protein uS15 (89 aa).

It belongs to the universal ribosomal protein uS15 family. As to quaternary structure, part of the 30S ribosomal subunit. Forms a bridge to the 50S subunit in the 70S ribosome, contacting the 23S rRNA.

Its function is as follows. One of the primary rRNA binding proteins, it binds directly to 16S rRNA where it helps nucleate assembly of the platform of the 30S subunit by binding and bridging several RNA helices of the 16S rRNA. Forms an intersubunit bridge (bridge B4) with the 23S rRNA of the 50S subunit in the ribosome. The protein is Small ribosomal subunit protein uS15 of Cereibacter sphaeroides (strain ATCC 17023 / DSM 158 / JCM 6121 / CCUG 31486 / LMG 2827 / NBRC 12203 / NCIMB 8253 / ATH 2.4.1.) (Rhodobacter sphaeroides).